The following is a 366-amino-acid chain: Flagellar P-ring protein (366 aa).

Residues 1 to 19 (MTLIRLLACLLFLPCLAQA) form the signal peptide.

The protein belongs to the FlgI family. The basal body constitutes a major portion of the flagellar organelle and consists of four rings (L,P,S, and M) mounted on a central rod.

The protein localises to the periplasm. It localises to the bacterial flagellum basal body. Assembles around the rod to form the L-ring and probably protects the motor/basal body from shearing forces during rotation. The polypeptide is Flagellar P-ring protein (Ruegeria pomeroyi (strain ATCC 700808 / DSM 15171 / DSS-3) (Silicibacter pomeroyi)).